Reading from the N-terminus, the 194-residue chain is GTP cyclohydrolase 1 (194 aa).

Zn(2+) is bound by residues cysteine 85, histidine 88, and cysteine 156.

The protein belongs to the GTP cyclohydrolase I family. As to quaternary structure, toroid-shaped homodecamer, composed of two pentamers of five dimers.

It carries out the reaction GTP + H2O = 7,8-dihydroneopterin 3'-triphosphate + formate + H(+). Its pathway is cofactor biosynthesis; 7,8-dihydroneopterin triphosphate biosynthesis; 7,8-dihydroneopterin triphosphate from GTP: step 1/1. The sequence is that of GTP cyclohydrolase 1 from Bacteroides fragilis (strain YCH46).